The primary structure comprises 105 residues: Class I hydrophobin 1 (105 aa).

The signal sequence occupies residues 1-17 (MQFTSFAILAISAVASA). 4 cysteine pairs are disulfide-bonded: C36–C85, C44–C78, C45–C63, and C86–C100. N-linked (GlcNAc...) asparagine glycosylation is found at N48, N67, and N97.

Belongs to the fungal hydrophobin family. In terms of assembly, self-assembles to form functional amyloid fibrils called rodlets. Self-assembly into fibrillar rodlets occurs spontaneously at hydrophobic:hydrophilic interfaces and the rodlets further associate laterally to form amphipathic monolayers. In terms of tissue distribution, abundant on conidia and aerial structures formed in vitro and emerging from disease lesions on infected tomato plants.

It is found in the secreted. The protein resides in the cell wall. Its function is as follows. Aerial growth, conidiation, and dispersal of filamentous fungi in the environment rely upon a capability of their secreting small amphipathic proteins called hydrophobins (HPBs) with low sequence identity. Class I can self-assemble into an outermost layer of rodlet bundles on aerial cell surfaces, conferring cellular hydrophobicity that supports fungal growth, development and dispersal; whereas Class II form highly ordered films at water-air interfaces through intermolecular interactions but contribute nothing to the rodlet structure. Hcf-1 is a class I hydrophobin that is not necessary for the development of hyphae or conidia but acts as the main determinant of conidium hydrophobicity and, thus, is required for efficient water-mediated dispersal of conidia. Forms a component of the rodlet layer, but other hydrophobins must also participate in this proces. In Passalora fulva (Tomato leaf mold), this protein is Class I hydrophobin 1.